Consider the following 211-residue polypeptide: uncharacterized protein (211 aa).

Over 1–33 (MQNGTEDKSNIPARSNDDVLPPLAVRLTMKVMR) the chain is Cytoplasmic. A helical membrane pass occupies residues 34–54 (LIFIGKMFAYSFVPFPPFKLL). The Lumenal portion of the chain corresponds to 55–58 (TFDN). Residues 59–79 (TVGWFVAYSAIVSIWGFAVWM) form a helical membrane-spanning segment. The Cytoplasmic portion of the chain corresponds to 80–116 (ERGYRHKINLLPPRCTKIRCSRCNTRIRSPNWFKYKN). Residues 117–137 (WLYFFLLYVSLTTSNLIIQLA) traverse the membrane as a helical segment. Topologically, residues 138–162 (SFMTEMSRRGISVPGTKDPGKRDYL) are lumenal. The helical transmembrane segment at 163–183 (GLIIPMRFIGAFIHYMTANLF) threads the bilayer. At 184-211 (KEYYLHNGPLEKNDRPSTDEKTSENETL) the chain is on the cytoplasmic side.

It is found in the endoplasmic reticulum membrane. This is an uncharacterized protein from Saccharomyces cerevisiae (strain ATCC 204508 / S288c) (Baker's yeast).